The primary structure comprises 459 residues: Glutamate--tRNA ligase 2 (459 aa).

Positions 8–18 (PSPTGYIHIGN) match the 'HIGH' region motif. Residues 249-253 (GLSKR) carry the 'KMSKS' region motif. Lys-252 is a binding site for ATP.

Belongs to the class-I aminoacyl-tRNA synthetase family. Glutamate--tRNA ligase type 1 subfamily. Monomer.

The protein resides in the cytoplasm. It catalyses the reaction tRNA(Glu) + L-glutamate + ATP = L-glutamyl-tRNA(Glu) + AMP + diphosphate. In terms of biological role, catalyzes the attachment of glutamate to tRNA(Glu) in a two-step reaction: glutamate is first activated by ATP to form Glu-AMP and then transferred to the acceptor end of tRNA(Glu). In Bartonella henselae (strain ATCC 49882 / DSM 28221 / CCUG 30454 / Houston 1) (Rochalimaea henselae), this protein is Glutamate--tRNA ligase 2.